The primary structure comprises 183 residues: Inner membrane-spanning protein YciB (183 aa).

Helical transmembrane passes span 22-44, 53-73, 76-96, 121-141, and 153-173; these read VQAA…RILF, IVGL…DLAF, WKVT…QYVF, LGWA…SQLF, and GFTG…YPYI.

Belongs to the YciB family.

The protein resides in the cell inner membrane. In terms of biological role, plays a role in cell envelope biogenesis, maintenance of cell envelope integrity and membrane homeostasis. The polypeptide is Inner membrane-spanning protein YciB (Haemophilus ducreyi (strain 35000HP / ATCC 700724)).